A 247-amino-acid polypeptide reads, in one-letter code: Mannose-specific lectin CML-2 (247 aa).

A carbohydrate is bound by residues Asp87 and Gly107. A glycan (N-linked (GlcNAc...) asparagine) is linked at Asn119. 2 residues coordinate Mn(2+): Glu129 and Asp131. The Ca(2+) site is built by Asp131 and Phe133. Positions 138 and 139 each coordinate a carbohydrate. Asn139 and Asp142 together coordinate Ca(2+). Residues Asp142 and His147 each contribute to the Mn(2+) site. Residues Gly221, Glu222, and Gln223 each contribute to the a carbohydrate site.

The protein belongs to the leguminous lectin family. In terms of assembly, homodimer; non-covalently linked. Glycosylated.

Its function is as follows. Mannose-specific lectin. Also binds alpha-methyl-D-mannoside, D-glucose, N-acetyl-D-glucosamine and sucrose but not D-galactose, D-arabinose, D-fructose, D-xylose, lactose or glycoproteins fetiun, PSM and ovalbumin. Shows agglutinating activity towards rabbit erythrocytes. The polypeptide is Mannose-specific lectin CML-2 (Centrolobium microchaete (Canarywood tree)).